The chain runs to 208 residues: Large ribosomal subunit protein uL4 (208 aa).

Residues 51–79 (AKERAEVSFSTKKLKKQKGTGGARAGSRK) are disordered.

Belongs to the universal ribosomal protein uL4 family. As to quaternary structure, part of the 50S ribosomal subunit.

Functionally, one of the primary rRNA binding proteins, this protein initially binds near the 5'-end of the 23S rRNA. It is important during the early stages of 50S assembly. It makes multiple contacts with different domains of the 23S rRNA in the assembled 50S subunit and ribosome. Its function is as follows. Forms part of the polypeptide exit tunnel. The chain is Large ribosomal subunit protein uL4 from Cytophaga hutchinsonii (strain ATCC 33406 / DSM 1761 / CIP 103989 / NBRC 15051 / NCIMB 9469 / D465).